Here is a 155-residue protein sequence, read N- to C-terminus: Snaclec clone 2100755 (155 aa).

An N-terminal signal peptide occupies residues 1 to 23 (MGRFIFVSFGLLVVFLSLSGTAA). Disulfide bonds link cysteine 25-cysteine 36, cysteine 53-cysteine 144, and cysteine 119-cysteine 136. Positions 32–145 (YDGHCYQVFS…CEKSVSFVCK (114 aa)) constitute a C-type lectin domain.

This sequence belongs to the snaclec family. As to quaternary structure, heterodimer; disulfide-linked.

The protein localises to the secreted. Interferes with one step of hemostasis (modulation of platelet aggregation, or coagulation cascade, for example). The protein is Snaclec clone 2100755 of Deinagkistrodon acutus (Hundred-pace snake).